We begin with the raw amino-acid sequence, 297 residues long: MRDNIIIITGITASGKSELCDNLIKKYGNISIVNCDSKQVYKEIPIITAQPPKQEEFYRLYGCVPAKENYSVGLWLEDLKGEVDHALENARMPIITGGSGLYISSLINSLSPIPKVSEEIRKNVSELRKNLSKEEFYKLVLSKDSKIQGKISTNDLHRLSRALEVITATGKSIFVWQESRQLPLFDNFKIYTILPKREDVYRKINSRFVTMIESGAVDEVKKLLNMNLAPHLPAMRAHGVPEIIKYLKGKITLSEAIQIAQTNTRHYAKRQYTWFKNQFPNSEVIDCANKLIEFEIF.

10 to 17 (GITASGKS) provides a ligand contact to ATP. 12–17 (TASGKS) serves as a coordination point for substrate. The interaction with substrate tRNA stretch occupies residues 36 to 39 (DSKQ).

Belongs to the IPP transferase family. Monomer. Mg(2+) is required as a cofactor.

The catalysed reaction is adenosine(37) in tRNA + dimethylallyl diphosphate = N(6)-dimethylallyladenosine(37) in tRNA + diphosphate. Its function is as follows. Catalyzes the transfer of a dimethylallyl group onto the adenine at position 37 in tRNAs that read codons beginning with uridine, leading to the formation of N6-(dimethylallyl)adenosine (i(6)A). The protein is tRNA dimethylallyltransferase of Wolbachia sp. subsp. Brugia malayi (strain TRS).